The primary structure comprises 1259 residues: MGKDQELLEAARTGNVALVEKLLSGRKGGILGGGSGPLPLSNLLSIWRGPNVNCTDSSGYTALHHAALNGHKDIVLKLLQYEASTNVADNKGYFPIHLAAWKGDVEIVKILIHHGPSHSRVNEQNNENETALHCAAQYGHSEVVAVLLEELTDPTIRNSKLETPLDLAALYGRLRVVKMIISAHPNLMSCNTRKHTPLHLAARNGHKAVVQVLLEAGMDVSCQTEKGSALHEAALFGKVDVVRVLLETGIDANIKDSLGRTVLDILKEHPSQKSLQIATLLQDYLEGAGRSAAVLEEHAQEDTAQETHLSSPAESPQKTKSETVTGELSKLLDEIKLCQEKDYSFEDLCHTISDHYLDNLSKISEEELGKNGSQSVRTSSTINLSPGEVEDEEEDPNSCGPTGLWEALTPCNGCRNLGFPMLAQESYPKKRNFPMEMEPSASLDTFPSENENFLCELVDTAVTKKPCSLEIARAPSPRTDNASEVAITAPGTSHHRNSSTGPTPDCSPPSPDTALKNIVKVIRPQPKQRTSIVSSLDFQRMNHNQEYFEISTSTGCTSFTSSPAASPPTSSVETTEVKNEGAEHADDLSQQEDDEPPKEYDAGQFAGLLHGSSPACESPENPFHLYGKRNTCEDGPDEASLANSPLPFKQTPIENNPEPSVKKVKPKVVSRTIFHKRNHQLENHTIVGTRMSRSGSRNGDQWGVNPGGFVERACTLGRIRSLPKALIDMHLSKNVSKSDSDLIAYPSKDKARVNWSKSSTAERSSKDNSERTPSFTSEWEEIDKIMNSIDVGINSELEGMNGETTRPRCPVQTVGQWLESIGLPQYENHLMANGFDSVQFMGSNVMEDQDLLEIGILNSGHRQRILQAIQLLPKMRPIGHDGYHPTSVAEWLDSIELGDYTKAFLINGYTSMDLLKKIWELELINVLKISLIGHRKRILASLGDRLHDDPPQKPPRSITLREPSGNHTPPQLSPSLSQSTYTTGGSLDVPHIIMQGDARRRRNENYFDDIPRSKLERQMAQTGDWGEPSITLRPPNEATASTPVQYWQHHPEKLIFQSCDYKAFYLGSMLIKELRGTESTQDACAKMRANCRKSTEQMKKVPTIILSVSYKGVKFIDAANKNIIAEHEIRNISCAAQDPEDLSTFAYITKDLKSNHHYCHVFTAFDVNLAYEIILTLGQAFEVAYQLALQARKGGHSSTLPESFENKPSKPIPKPRVSIRKSVQIDPSEQKTLANLPWIVEPGQEAKRGINTKYETTIF.

ANK repeat units lie at residues 2–31 (GKDQ…GGIL), 58–87 (SGYT…STNV), 91–120 (KGYF…SHSR), 127–156 (ENET…DPTI), 160–189 (KLET…NLMS), 193–222 (RKHT…DVSC), and 225–254 (EKGS…DANI). Residues 298–325 (HAQEDTAQETHLSSPAESPQKTKSETVT) form a disordered region. Polar residues predominate over residues 306–325 (ETHLSSPAESPQKTKSETVT). Phosphoserine is present on residues Ser-310, Ser-311, Ser-315, Ser-353, and Ser-364. Disordered regions lie at residues 367–401 (ELGK…SCGP), 490–513 (PGTS…SPDT), 556–614 (CTSF…GSSP), and 631–661 (TCED…EPSV). Over residues 371-384 (NGSQSVRTSSTINL) the composition is skewed to polar residues. A Phosphothreonine modification is found at Thr-503. A phosphoserine mark is found at Ser-507 and Ser-510. Low complexity predominate over residues 556-574 (CTSFTSSPAASPPTSSVET). Residues 575–587 (TEVKNEGAEHADD) show a composition bias toward basic and acidic residues. Residue Ser-738 is modified to Phosphoserine. The disordered stretch occupies residues 753–776 (VNWSKSSTAERSSKDNSERTPSFT). Thr-772 bears the Phosphothreonine mark. Ser-774 bears the Phosphoserine mark. SAM domains follow at residues 809–875 (CPVQ…LPKM) and 883–948 (YHPT…RLHD). A Phosphotyrosine modification is found at Tyr-900. Position 934 (His-934) is a short sequence motif, nuclear localization signal. The disordered stretch occupies residues 943–988 (GDRLHDDPPQKPPRSITLREPSGNHTPPQLSPSLSQSTYTTGGSLD). The span at 968–983 (TPPQLSPSLSQSTYTT) shows a compositional bias: low complexity. Ser-973 is subject to Phosphoserine. Tyr-1006 carries the post-translational modification Phosphotyrosine. In terms of domain architecture, PID spans 1055–1212 (IFQSCDYKAF…SFENKPSKPI (158 aa)). Positions 1196–1216 (HSSTLPESFENKPSKPIPKPR) are disordered.

In terms of assembly, interacts with EPHA8. Isoform 2 interacts with COIL.

It is found in the cytoplasm. It localises to the nucleus. The protein resides in the postsynaptic density. The protein localises to the cell projection. Its subcellular location is the dendritic spine. In terms of biological role, isoform 2 may participate in the regulation of nucleoplasmic coilin protein interactions in neuronal and transformed cells. In Mus musculus (Mouse), this protein is Ankyrin repeat and sterile alpha motif domain-containing protein 1B (Anks1b).